The following is a 620-amino-acid chain: Chaperone protein HscA homolog (620 aa).

It belongs to the heat shock protein 70 family.

In terms of biological role, chaperone involved in the maturation of iron-sulfur cluster-containing proteins. Has a low intrinsic ATPase activity which is markedly stimulated by HscB. The chain is Chaperone protein HscA homolog from Shewanella woodyi (strain ATCC 51908 / MS32).